Reading from the N-terminus, the 80-residue chain is Exodeoxyribonuclease 7 small subunit (80 aa).

The protein belongs to the XseB family. In terms of assembly, heterooligomer composed of large and small subunits.

The protein resides in the cytoplasm. The enzyme catalyses Exonucleolytic cleavage in either 5'- to 3'- or 3'- to 5'-direction to yield nucleoside 5'-phosphates.. Bidirectionally degrades single-stranded DNA into large acid-insoluble oligonucleotides, which are then degraded further into small acid-soluble oligonucleotides. In Lactobacillus helveticus (strain DPC 4571), this protein is Exodeoxyribonuclease 7 small subunit.